The primary structure comprises 51 residues: Large ribosomal subunit protein eL39 (51 aa).

It belongs to the eukaryotic ribosomal protein eL39 family.

The chain is Large ribosomal subunit protein eL39 from Staphylothermus marinus (strain ATCC 43588 / DSM 3639 / JCM 9404 / F1).